Here is a 136-residue protein sequence, read N- to C-terminus: Small ribosomal subunit protein eS17A (136 aa).

This sequence belongs to the eukaryotic ribosomal protein eS17 family. As to quaternary structure, component of the small ribosomal subunit (SSU). Mature yeast ribosomes consist of a small (40S) and a large (60S) subunit. The 40S small subunit contains 1 molecule of ribosomal RNA (18S rRNA) and 33 different proteins (encoded by 57 genes). The large 60S subunit contains 3 rRNA molecules (25S, 5.8S and 5S rRNA) and 46 different proteins (encoded by 81 genes).

It localises to the cytoplasm. In terms of biological role, component of the ribosome, a large ribonucleoprotein complex responsible for the synthesis of proteins in the cell. The small ribosomal subunit (SSU) binds messenger RNAs (mRNAs) and translates the encoded message by selecting cognate aminoacyl-transfer RNA (tRNA) molecules. The large subunit (LSU) contains the ribosomal catalytic site termed the peptidyl transferase center (PTC), which catalyzes the formation of peptide bonds, thereby polymerizing the amino acids delivered by tRNAs into a polypeptide chain. The nascent polypeptides leave the ribosome through a tunnel in the LSU and interact with protein factors that function in enzymatic processing, targeting, and the membrane insertion of nascent chains at the exit of the ribosomal tunnel. The polypeptide is Small ribosomal subunit protein eS17A (Saccharomyces cerevisiae (strain ATCC 204508 / S288c) (Baker's yeast)).